Reading from the N-terminus, the 353-residue chain is Photosystem II protein D1 (353 aa).

Threonine 2 bears the N-acetylthreonine mark. Threonine 2 bears the Phosphothreonine mark. 3 helical membrane passes run 29–46 (YIGWFGVLMIPTLLTATS), 118–133 (HFLLGVACYMGREWEL), and 142–156 (WIAVAYSAPVAAATA). Residue histidine 118 participates in chlorophyll a binding. Residue tyrosine 126 participates in pheophytin a binding. Residues aspartate 170 and glutamate 189 each coordinate [CaMn4O5] cluster. A helical transmembrane segment spans residues 197–218 (FHMLGVAGVFGGSLFSAMHGSL). Histidine 198 contacts chlorophyll a. A quinone is bound by residues histidine 215 and 264 to 265 (SF). A Fe cation-binding site is contributed by histidine 215. Residue histidine 272 coordinates Fe cation. The helical transmembrane segment at 274–288 (FLAAWPVVGIWFTAL) threads the bilayer. Residues histidine 332, glutamate 333, aspartate 342, and alanine 344 each contribute to the [CaMn4O5] cluster site. Residues 345–353 (SVEAPSINA) constitute a propeptide that is removed on maturation.

Belongs to the reaction center PufL/M/PsbA/D family. PSII is composed of 1 copy each of membrane proteins PsbA, PsbB, PsbC, PsbD, PsbE, PsbF, PsbH, PsbI, PsbJ, PsbK, PsbL, PsbM, PsbT, PsbX, PsbY, PsbZ, Psb30/Ycf12, at least 3 peripheral proteins of the oxygen-evolving complex and a large number of cofactors. It forms dimeric complexes. The D1/D2 heterodimer binds P680, chlorophylls that are the primary electron donor of PSII, and subsequent electron acceptors. It shares a non-heme iron and each subunit binds pheophytin, quinone, additional chlorophylls, carotenoids and lipids. D1 provides most of the ligands for the Mn4-Ca-O5 cluster of the oxygen-evolving complex (OEC). There is also a Cl(-1) ion associated with D1 and D2, which is required for oxygen evolution. The PSII complex binds additional chlorophylls, carotenoids and specific lipids. serves as cofactor. Post-translationally, tyr-161 forms a radical intermediate that is referred to as redox-active TyrZ, YZ or Y-Z. C-terminally processed by CTPA; processing is essential to allow assembly of the oxygen-evolving complex and thus photosynthetic growth.

It localises to the plastid. The protein localises to the chloroplast thylakoid membrane. The enzyme catalyses 2 a plastoquinone + 4 hnu + 2 H2O = 2 a plastoquinol + O2. Photosystem II (PSII) is a light-driven water:plastoquinone oxidoreductase that uses light energy to abstract electrons from H(2)O, generating O(2) and a proton gradient subsequently used for ATP formation. It consists of a core antenna complex that captures photons, and an electron transfer chain that converts photonic excitation into a charge separation. The D1/D2 (PsbA/PsbD) reaction center heterodimer binds P680, the primary electron donor of PSII as well as several subsequent electron acceptors. The polypeptide is Photosystem II protein D1 (Chara vulgaris (Common stonewort)).